The following is a 173-amino-acid chain: dCTP deaminase, dUMP-forming (173 aa).

Residues 93 to 98 (RSSTGR), aspartate 111, 119 to 121 (TLE), glutamine 138, and tyrosine 151 contribute to the dCTP site. Glutamate 121 serves as the catalytic Proton donor/acceptor.

This sequence belongs to the dCTP deaminase family. As to quaternary structure, homotrimer.

It carries out the reaction dCTP + 2 H2O = dUMP + NH4(+) + diphosphate. It participates in pyrimidine metabolism; dUMP biosynthesis; dUMP from dCTP: step 1/1. Bifunctional enzyme that catalyzes both the deamination of dCTP to dUTP and the hydrolysis of dUTP to dUMP without releasing the toxic dUTP intermediate. The protein is dCTP deaminase, dUMP-forming of Clostridium botulinum (strain Eklund 17B / Type B).